We begin with the raw amino-acid sequence, 1342 residues long: MVYSYTEKKRIRKSFGKRPQVLNVPYLLTIQLDSFDKFIQRDPDGQQGLEAAFRSIFPIVSNNGNTELQYVSYQLGEPVFDVRECQIRGTTYAASLRVKLRLVSYDKDAASGTIKDIKEQEVYMGEIPLMTSNGTFVINGTERVVVSQLHRSPGVFFDSDKGKTHSSGKVLYNARIIPYRGSWLDFEFDPKDNLYARIDRRRKLPATIILRALNYTTEEILDLFFDKVSFEIKDNKLLMTLVPERLRGETASFDIEANGKVYIERGRRITARHIKALEKDKITQVEVPTEYIVGKVSAKDYVDLTTGEIICPANMEISLELLEKLSQAGYKNIETLFTNDLDFGPYISETLRVDPSYDRLSALVEIYRMMRPGEPPTKEAAEGLFDNLFFSSERYDLSAVGRMKFNRSLGIEDTTGSGTLSKEDIVNVMRKLIDIRNGRGEVDDIDHLGNRRIRSVGEMAENQFRIGLVRVERAVKERLSLGDLESVTPQDLINAKPISAAVKEFFGSSQLSQFMDQNNPLSEVTHKRRISALGPGGLTRERAGFEVRDVHATHYGRVCPIETPEGPNIGLINSLSVYARTNDYGFLETPYRKVVNGQVTEEIEYLSAIEEGKYVIAQANSNLDGELRFTDAFVTCRGEHGESGLYRPEEIHYMDVSTQQVVSVAAALIPFLEHDDANRALMGANMQRQAVPTLRADKPLVGTGMEKPVALDSGVAVVAKRGGTIQYVDASRIVVKVNEDETIAGEAGIDIYNLIKYTRSNQNTCINQIPCVQLGEPIERGEILADGPSTDLGELALGQNMRVAFMPWNGYNFEDSMLVSERVVQEDRFTTIHIQELSCVARDTKLGSEEITADIPNVGEAALSKLDESGIVYIGAEVKGGDILVGKVTPKGETQLTPEEKLLRAIFGEKASDVKDSSLRVPNGTSGTVIDVQVFTRDGVEKDKRALEIEEMQLKQAKKDLVEELEILEAGLFARVRNLLLSGGFNDKQLENLDRTQWLEQTLVDEDKQNQLEQLAEQYEELRKDFEHKLEIKRSKIIQGDDLAPGVLKVVKVYLAVKRQIQPGDKMAGRHGNKGVISKINPVEDMPYDENGQPVDIVLNPLGVPSRMNIGQILETHLGLAAKGIGDQINAMIKQKQDVEKLRGYIQKAYDLGDGSQKVDLSTFTDEEVLRLAKNLRKGMPLATPVFDGAHEKEIKALLELGGLPTSGQITLFDGRTGEKFERPVTVGYMYMLKLNHLVDDKMHARSTGSYSLVTQQPLGGKAQFGGQRFGEMEVWALEAYGAAYTLQEMLTVKSDDVNGRTKMYKNIVGGTHQMDPGTPESFNVIMKEIRSLGINIDLDEE.

This sequence belongs to the RNA polymerase beta chain family. In terms of assembly, the RNAP catalytic core consists of 2 alpha, 1 beta, 1 beta' and 1 omega subunit. When a sigma factor is associated with the core the holoenzyme is formed, which can initiate transcription.

It carries out the reaction RNA(n) + a ribonucleoside 5'-triphosphate = RNA(n+1) + diphosphate. Functionally, DNA-dependent RNA polymerase catalyzes the transcription of DNA into RNA using the four ribonucleoside triphosphates as substrates. This is DNA-directed RNA polymerase subunit beta from Histophilus somni (strain 129Pt) (Haemophilus somnus).